The sequence spans 683 residues: THO complex subunit 5 (683 aa).

A disordered region spans residues 1–42 (MSSESSKKRKPKVIRSDGAPAEGKRNRSDTEQEGKYYSEEAE). Residue S2 is modified to N-acetylserine. The tract at residues 2-144 (SSESSKKRKP…YEVMHLQKEI (143 aa)) is interaction with CSF1R. The segment at 2–199 (SSESSKKRKP…RLDWELEQRK (198 aa)) is interaction with THOC7. 2 positions are modified to phosphoserine: S5 and S6. Positions 7–10 (KKRK) match the Nuclear localization signal motif. Basic and acidic residues predominate over residues 22-42 (EGKRNRSDTEQEGKYYSEEAE). Residues 81 to 247 (AIEIEERRIQ…QASLPVQEYL (167 aa)) adopt a coiled-coil conformation. Residue K153 forms a Glycyl lysine isopeptide (Lys-Gly) (interchain with G-Cter in SUMO2) linkage. Position 225 is a phosphotyrosine; by SRC (Y225). The tandem RWD domains stretch occupies residues 247–683 (LFMPFDQAHK…NHPQGFFSHR (437 aa)). A disordered region spans residues 301–336 (FKPPEDSQDDESDSDAEEEQTTKRRRPTLGVQLDDK). Residues 306–319 (DSQDDESDSDAEEE) are compositionally biased toward acidic residues. Phosphoserine is present on residues S307, S312, and S314. T328 bears the Phosphothreonine mark.

It belongs to the THOC5 family. In terms of assembly, component of the THO subcomplex, which is composed of THOC1, THOC2, THOC3, THOC5, THOC6 and THOC7. The THO subcomplex interacts with DDX39B to form the THO-DDX39B complex which multimerizes into a 28-subunit tetrameric assembly. Component of the transcription/export (TREX) complex at least composed of ALYREF/THOC4, DDX39B, SARNP/CIP29, CHTOP and the THO subcomplex; in the complex interacts with THOC1, THOC2, THOC5, THOC6 and THOC7; forms a coiled-coil dimer with THOC7; together with THOC6 and THOC7, plays a key structural role in oligomerization of the THO-DDX39B complex. TREX seems to have a dynamic structure involving ATP-dependent remodeling. Interacts with phosphorylated CSF1R. Interacts (via N-terminus) with the NTF2 domain of NXF1. Forms a complex with CEBPB. Interacts with CPSF6; indicative for an association with the cleavage factor Im (CFIm) complex. Interacts with LUZP4. Interacts with NCBP3. In terms of processing, phosphorylated on tyrosine upon binding to activated CSF1R; which causes a dissociation of the two proteins. Phosphorylation on Ser-5 and/or Ser-6 is required for nuclear export. Phosphorylated on Thr-328 in insulin-stimulated adipocytes. Phosphorylation at Tyr-225 modulates mRNA binding. Ubiquitously expressed.

It localises to the nucleus. Its subcellular location is the cytoplasm. Component of the THO subcomplex of the TREX complex which is thought to couple mRNA transcription, processing and nuclear export, and which specifically associates with spliced mRNA and not with unspliced pre-mRNA. Plays a key structural role in the oligomerization of the THO-DDX39B complex. TREX is recruited to spliced mRNAs by a transcription-independent mechanism, binds to mRNA upstream of the exon-junction complex (EJC) and is recruited in a splicing- and cap-dependent manner to a region near the 5' end of the mRNA where it functions in mRNA export to the cytoplasm via the TAP/NXF1 pathway. THOC5 in conjunction with ALYREF/THOC4 functions in NXF1-NXT1 mediated nuclear export of HSP70 mRNA; both proteins enhance the RNA binding activity of NXF1 and are required for NXF1 localization to the nuclear rim. Involved in transcription elongation and genome stability. Involved in alternative polyadenylation site choice by recruiting CPSF6 to 5' region of target genes; probably mediates association of the TREX and CFIm complexes. In terms of biological role, regulates the expression of myeloid transcription factors CEBPA, CEBPB and GAB2 by enhancing the levels of phosphatidylinositol 3,4,5-trisphosphate. May be involved in the differentiation of granulocytes and adipocytes. Essential for hematopoietic primitive cell survival and plays an integral role in monocytic development. Functionally, (Microbial infection) The TREX complex is essential for the export of Kaposi's sarcoma-associated herpesvirus (KSHV) intronless mRNAs and infectious virus production. The polypeptide is THO complex subunit 5 (THOC5) (Homo sapiens (Human)).